We begin with the raw amino-acid sequence, 113 residues long: Holo-[acyl-carrier-protein] synthase (113 aa).

Mg(2+) is bound by residues Asp8 and Glu57.

It belongs to the P-Pant transferase superfamily. AcpS family. Mg(2+) is required as a cofactor.

It localises to the cytoplasm. It catalyses the reaction apo-[ACP] + CoA = holo-[ACP] + adenosine 3',5'-bisphosphate + H(+). In terms of biological role, transfers the 4'-phosphopantetheine moiety from coenzyme A to a Ser of acyl-carrier-protein. This Thermodesulfovibrio yellowstonii (strain ATCC 51303 / DSM 11347 / YP87) protein is Holo-[acyl-carrier-protein] synthase.